A 156-amino-acid chain; its full sequence is Endogenous retrovirus group K member 19 Pro protein (156 aa).

Positions 21–96 (FEGLVDTGAD…IPLNLWGRDL (76 aa)) constitute a Peptidase A2 domain. Asp-26 is an active-site residue. Residues 111–156 (YSPTSQKIMTKMGYILGKGLGKNEDGIKIPVEAKINQKREGIGYPF) enclose the G-patch domain.

The protein belongs to the peptidase A2 family. HERV class-II K(HML-2) subfamily. Active as a homodimer. Autoproteolytically processed at the N-terminus. Expected C-terminal autoprocessing not detected. The sequence shown is that of the processed Pro protein.

It carries out the reaction Processing at the authentic HIV-1 PR recognition site and release of the mature p17 matrix and the p24 capsid protein, as a result of the cleavage of the -SQNY-|-PIVQ- cleavage site.. In terms of biological role, retroviral proteases have roles in the processing of the primary translation products and the maturation of the viral particle. Endogenous Pro proteins may have kept, lost or modified their original function during evolution. The polypeptide is Endogenous retrovirus group K member 19 Pro protein (ERVK-19) (Homo sapiens (Human)).